Here is a 741-residue protein sequence, read N- to C-terminus: Ion-translocating oxidoreductase complex subunit C (741 aa).

2 4Fe-4S ferredoxin-type domains span residues 369-397 and 407-436; these read GEPQ…QQLY and KATT…VQYF. 8 residues coordinate [4Fe-4S] cluster: C377, C380, C383, C387, C416, C419, C422, and C426. The segment at 627–654 is disordered; that stretch reads IARAKARKLEQQQQANAEPEEQVDPRKA.

The protein belongs to the 4Fe4S bacterial-type ferredoxin family. RnfC subfamily. The complex is composed of six subunits: RsxA, RsxB, RsxC, RsxD, RsxE and RsxG. [4Fe-4S] cluster is required as a cofactor.

It is found in the cell inner membrane. In terms of biological role, part of a membrane-bound complex that couples electron transfer with translocation of ions across the membrane. Required to maintain the reduced state of SoxR. This Escherichia coli O127:H6 (strain E2348/69 / EPEC) protein is Ion-translocating oxidoreductase complex subunit C.